Here is a 479-residue protein sequence, read N- to C-terminus: uncharacterized protein (479 aa).

8 consecutive transmembrane segments (helical) span residues 25 to 45 (VVFV…LFFF), 63 to 83 (IAMI…LAGG), 110 to 130 (LFGP…TVIF), 133 to 153 (GVFN…AGIL), 175 to 195 (VLSI…VLGI), 229 to 249 (ILLY…IVWL), 287 to 307 (LILN…IAFI), and 328 to 348 (LFAP…LLLL).

The protein in the C-terminal section; belongs to the GatC family.

It localises to the cell membrane. This is an uncharacterized protein from Mycoplasma pneumoniae (strain ATCC 29342 / M129 / Subtype 1) (Mycoplasmoides pneumoniae).